We begin with the raw amino-acid sequence, 231 residues long: 7-cyano-7-deazaguanine synthase (231 aa).

Leu-7–Leu-17 contributes to the ATP binding site. Zn(2+)-binding residues include Cys-195, Cys-203, Cys-206, and Cys-209.

This sequence belongs to the QueC family. Zn(2+) serves as cofactor.

It catalyses the reaction 7-carboxy-7-deazaguanine + NH4(+) + ATP = 7-cyano-7-deazaguanine + ADP + phosphate + H2O + H(+). Its pathway is purine metabolism; 7-cyano-7-deazaguanine biosynthesis. Its function is as follows. Catalyzes the ATP-dependent conversion of 7-carboxy-7-deazaguanine (CDG) to 7-cyano-7-deazaguanine (preQ(0)). The protein is 7-cyano-7-deazaguanine synthase of Methanosarcina mazei (strain ATCC BAA-159 / DSM 3647 / Goe1 / Go1 / JCM 11833 / OCM 88) (Methanosarcina frisia).